The sequence spans 257 residues: Triosephosphate isomerase (257 aa).

Asn-9–Lys-11 is a binding site for substrate. The active-site Electrophile is the His-97. The active-site Proton acceptor is Glu-169. Substrate is bound by residues Gly-175, Ser-214, and Gly-235–Gly-236.

Belongs to the triosephosphate isomerase family. As to quaternary structure, homodimer.

Its subcellular location is the cytoplasm. It catalyses the reaction D-glyceraldehyde 3-phosphate = dihydroxyacetone phosphate. It functions in the pathway carbohydrate biosynthesis; gluconeogenesis. The protein operates within carbohydrate degradation; glycolysis; D-glyceraldehyde 3-phosphate from glycerone phosphate: step 1/1. In terms of biological role, involved in the gluconeogenesis. Catalyzes stereospecifically the conversion of dihydroxyacetone phosphate (DHAP) to D-glyceraldehyde-3-phosphate (G3P). The sequence is that of Triosephosphate isomerase from Vibrio cholerae serotype O1 (strain ATCC 39315 / El Tor Inaba N16961).